Here is a 1049-residue protein sequence, read N- to C-terminus: RTX-III toxin determinant A from serotype 2 (1049 aa).

The next 3 membrane-spanning stretches (helical) occupy residues 154–170 (TIIS…LAGI), 315–331 (ALIA…LAFL), and 397–413 (LVGA…TGLI). Hemolysin-type calcium-binding repeat units lie at residues 743–760 (KGSK…DDLL), 761–778 (NGND…NDEL), 779–796 (RGDN…DDKL), 797–814 (LGGN…NDEL), 825–842 (RGGK…SDLL), and 843–860 (DGGE…SDFY).

Belongs to the RTX prokaryotic toxin (TC 1.C.11) family. Post-translationally, palmitoylated by ApxIIIC. The toxin only becomes active when modified.

Its subcellular location is the secreted. It localises to the host cell membrane. Does not have hemolytic activity but shows a strong cytotoxicity towards alveolar macrophages and neutrophils. This chain is RTX-III toxin determinant A from serotype 2 (apxIIIA), found in Actinobacillus pleuropneumoniae (Haemophilus pleuropneumoniae).